Consider the following 471-residue polypeptide: F-box only protein 3 (471 aa).

Residues 10–56 (PLTLESLPTDPLLLILSFLDYRDLINCCYVSRRLSQLSSHDPLWRRH) enclose the F-box domain. Residues 278 to 408 (VATTGDITVS…FHMACPTFRV (131 aa)) enclose the ApaG domain. The segment covering 419 to 451 (EYEEMEEEEEEEEEEDEDDDSADMDESDEDDEE) has biased composition (acidic residues). The tract at residues 419 to 455 (EYEEMEEEEEEEEEEDEDDDSADMDESDEDDEEERRR) is disordered.

Part of a SCF (SKP1-cullin-F-box) protein ligase complex SCF(FBXO3) consisting of FBXO3, SKP1, CUL1 and RBX1. Interacts with PML, interaction is direct and takes place either alone or within the SCF complex. As to quaternary structure, (Microbial infection) Interacts (via ApaG domain) with Rift valley fever virus NSs helical filament; this interaction forms a filamentous E3 which mediates degradation of TFIIH complex through interaction with GT2H1.

It localises to the nucleus. It participates in protein modification; protein ubiquitination. Substrate recognition component of the SCF (SKP1-CUL1-F-box protein)-type E3 ubiquitin ligase complex, SCF(FBXO3), which mediates the ubiquitination and subsequent proteasomal degradation of target proteins. Mediates the ubiquitination of HIPK2 and probably that of EP300, leading to rapid degradation by the proteasome. In the presence of PML, HIPK2 ubiquitination still occurs, but degradation is prevented. PML, HIPK2 and FBXO3 may act synergically to activate p53/TP53-dependent transactivation. The SCF(FBXO3) also acts as a regulator of inflammation by mediating ubiquitination and degradation of FBXL2 in response to lipopolysaccharide (LPS). The SCF(FBXO3) complex specifically recognizes FBXL2 phosphorylated at 'Thr-404' and promotes its ubiquitination. In terms of biological role, (Microbial infection) Associates with the Rift valley fever virus NSs to form a remodeled E3 ligase that triggers efficient proteasomal degradation of targeted proteins. The filamentous E3 ligase targets the TFIIH complex leading to robust inhibition of antiviral immunity and enhances viral pathogenesis. The protein is F-box only protein 3 of Homo sapiens (Human).